The primary structure comprises 908 residues: Protein translocase subunit SecA (908 aa).

ATP is bound by residues Q87, 105–109 (GEGKT), and D511. The segment covering 559-570 (ERHESRRIDNQL) has biased composition (basic and acidic residues). Disordered regions lie at residues 559-582 (ERHE…DPGS) and 841-908 (RRRR…GRLE). A compositionally biased stretch (low complexity) spans 847 to 856 (LAQQMQRAQA). Acidic residues predominate over residues 862-873 (TEEDSDAEEQAE). Zn(2+)-binding residues include C892, C894, C903, and H904. Residues 898 to 908 (KKYKQCHGRLE) are compositionally biased toward basic residues.

This sequence belongs to the SecA family. Monomer and homodimer. Part of the essential Sec protein translocation apparatus which comprises SecA, SecYEG and auxiliary proteins SecDF-YajC and YidC. Zn(2+) serves as cofactor.

The protein resides in the cell inner membrane. It is found in the cytoplasm. The catalysed reaction is ATP + H2O + cellular proteinSide 1 = ADP + phosphate + cellular proteinSide 2.. Functionally, part of the Sec protein translocase complex. Interacts with the SecYEG preprotein conducting channel. Has a central role in coupling the hydrolysis of ATP to the transfer of proteins into and across the cell membrane, serving both as a receptor for the preprotein-SecB complex and as an ATP-driven molecular motor driving the stepwise translocation of polypeptide chains across the membrane. This chain is Protein translocase subunit SecA, found in Hahella chejuensis (strain KCTC 2396).